A 479-amino-acid chain; its full sequence is Something about silencing protein 10 (479 aa).

Residues 1-10 show a composition bias toward basic residues; that stretch reads MVGRSRRRGA. Disordered regions lie at residues 1–45 and 62–166; these read MVGR…SYYQ and KGWN…EEAQ. Arg-8 carries the post-translational modification Omega-N-methylarginine. The segment covering 11 to 21 has biased composition (low complexity); the sequence is AKWAAVRAKAG. A Phosphoserine modification is found at Ser-37. Residues 69-111 are compositionally biased toward acidic residues; the sequence is SGDEEDGEEEEEEVLALDMDDEDDEDGGNAGEEEEEENADDDG. Lys-144 carries the post-translational modification N6-acetyllysine; alternate. Lys-144 participates in a covalent cross-link: Glycyl lysine isopeptide (Lys-Gly) (interchain with G-Cter in SUMO2); alternate. Ser-150 bears the Phosphoserine mark. The segment covering 153–165 has biased composition (acidic residues); the sequence is EAEEEEREEEEEA. Residue Thr-362 is modified to Phosphothreonine. Phosphoserine occurs at positions 365 and 368. Arg-385 carries the post-translational modification Citrulline. Residues 419–466 are disordered; sequence RGLTPRRKKIDRNPRVKHREKFRRAKIRRRGQVREVRKEEQRYSGELS. Residues 422 to 449 show a composition bias toward basic residues; sequence TPRRKKIDRNPRVKHREKFRRAKIRRRG. Over residues 450–461 the composition is skewed to basic and acidic residues; it reads QVREVRKEEQRY.

Belongs to the SAS10 family. Part of the small subunit (SSU) processome, composed of more than 70 proteins and the RNA chaperone small nucleolar RNA (snoRNA) U3. Post-translationally, citrullinated by PADI4.

The protein localises to the nucleus. The protein resides in the nucleolus. Essential for gene silencing: has a role in the structure of silenced chromatin. Plays a role in the developing brain. Part of the small subunit (SSU) processome, first precursor of the small eukaryotic ribosomal subunit. During the assembly of the SSU processome in the nucleolus, many ribosome biogenesis factors, an RNA chaperone and ribosomal proteins associate with the nascent pre-rRNA and work in concert to generate RNA folding, modifications, rearrangements and cleavage as well as targeted degradation of pre-ribosomal RNA by the RNA exosome. The polypeptide is Something about silencing protein 10 (Homo sapiens (Human)).